The sequence spans 504 residues: Alpha-L-arabinofuranosidase C (504 aa).

N-linked (GlcNAc...) asparagine glycosylation is found at N81, N152, N269, and N329.

This sequence belongs to the glycosyl hydrolase 51 family.

Its subcellular location is the secreted. The catalysed reaction is Hydrolysis of terminal non-reducing alpha-L-arabinofuranoside residues in alpha-L-arabinosides.. Its pathway is glycan metabolism; L-arabinan degradation. Its function is as follows. Alpha-L-arabinofuranosidase involved in the degradation of arabinoxylan, a major component of plant hemicellulose. Acts only on small linear 1,5-alpha-linked L-arabinofuranosyl oligosaccharides. The sequence is that of Alpha-L-arabinofuranosidase C (abfC) from Emericella nidulans (strain FGSC A4 / ATCC 38163 / CBS 112.46 / NRRL 194 / M139) (Aspergillus nidulans).